A 305-amino-acid chain; its full sequence is MSDMNKILHKWSASLKKGTDFDSWGQLVEAIDEYQILARQLQKEAQSPANSSDFTEDQKKTIGKIATCLGLRSAALQYTQSQEGFTLEDVKKLEPILSSIVTFNKEFPFDVQPVPLRRILAPGEEENLEVDEEEEDGGAGIGSPDLFPARVPGTLLPRLPSEPGMTLLTIKIEKIGLKDAGQCIDPYITVSVKDLNGIDLTPVQDTPMATRKEDTYVHFNVEIEIQKHVEKLTKGAAIFFEFKHYKPKKRFTSTKCFAFMEMDEIKPGQTVIELYKKPTDFKRKKLQLLTKKPLYLHLLQTLLKD.

Positions 153–220 (GTLLPRLPSE…RKEDTYVHFN (68 aa)) are axin-binding. A C2 Aida-type domain is found at 156 to 303 (LPRLPSEPGM…LYLHLLQTLL (148 aa)).

The protein belongs to the AIDA family.

In terms of biological role, acts as a ventralizing factor during embryogenesis. Inhibits axin-mediated JNK activation by binding axin and disrupting axin homodimerization. This in turn antagonizes a Wnt/beta-catenin-independent dorsalization pathway activated by axin/JNK-signaling. This is Axin interactor, dorsalization-associated protein A (aida-a) from Xenopus laevis (African clawed frog).